The following is a 118-amino-acid chain: Large ribosomal subunit protein bL20 (118 aa).

Belongs to the bacterial ribosomal protein bL20 family.

Its function is as follows. Binds directly to 23S ribosomal RNA and is necessary for the in vitro assembly process of the 50S ribosomal subunit. It is not involved in the protein synthesizing functions of that subunit. In Shigella flexneri serotype 5b (strain 8401), this protein is Large ribosomal subunit protein bL20.